Here is a 130-residue protein sequence, read N- to C-terminus: Small ribosomal subunit protein uS11 (130 aa).

The protein belongs to the universal ribosomal protein uS11 family. Part of the 30S ribosomal subunit. Interacts with proteins S7 and S18. Binds to IF-3.

Functionally, located on the platform of the 30S subunit, it bridges several disparate RNA helices of the 16S rRNA. Forms part of the Shine-Dalgarno cleft in the 70S ribosome. This is Small ribosomal subunit protein uS11 from Xanthomonas oryzae pv. oryzae (strain MAFF 311018).